We begin with the raw amino-acid sequence, 159 residues long: Protein-export protein SecB (159 aa).

Belongs to the SecB family. Homotetramer, a dimer of dimers. One homotetramer interacts with 1 SecA dimer.

It is found in the cytoplasm. Functionally, one of the proteins required for the normal export of preproteins out of the cell cytoplasm. It is a molecular chaperone that binds to a subset of precursor proteins, maintaining them in a translocation-competent state. It also specifically binds to its receptor SecA. The sequence is that of Protein-export protein SecB from Pseudomonas fluorescens (strain SBW25).